We begin with the raw amino-acid sequence, 568 residues long: Tetratricopeptide repeat protein 22 (568 aa).

7 TPR repeats span residues 66–99, 101–133, 155–190, 203–237, 260–294, 296–328, and 432–465; these read PAVRHLLGTFSFYLEELGDAREHFLEVARKDPGN, NAWANLAHVYGQLGQEEEEEASAGRLASLMGLE, YAHGFDVGCASPEERAQVLEAGIALYDKALGYGQQI, ATLFIRLDGIFLEMGSEEQKRLPAFNRTLALLGEV, KDTFSTTPMGVHEYGYSGTEPLDCFGKAIEIAKNQ, PILNRLAKIFHFLGKQDMAVGTCNMVLAVLTDP, and PELQLLRGKCLRVQGEDANAAACFKRAVELDDEG.

This chain is Tetratricopeptide repeat protein 22 (Ttc22), found in Mus musculus (Mouse).